We begin with the raw amino-acid sequence, 424 residues long: UPF0597 protein Ssed_2537 (424 aa).

The protein belongs to the UPF0597 family.

This chain is UPF0597 protein Ssed_2537, found in Shewanella sediminis (strain HAW-EB3).